A 353-amino-acid chain; its full sequence is Holliday junction branch migration complex subunit RuvB (353 aa).

The large ATPase domain (RuvB-L) stretch occupies residues 4 to 190 (TDKLQAPRVI…FGIVARLEFY (187 aa)). Residues leucine 29, arginine 30, glycine 71, lysine 74, threonine 75, threonine 76, 137 to 139 (EDF), arginine 180, tyrosine 190, and arginine 227 contribute to the ATP site. A Mg(2+)-binding site is contributed by threonine 75. Positions 191-261 (TPHELAYIVG…VADAALLMLD (71 aa)) are small ATPAse domain (RuvB-S). A head domain (RuvB-H) region spans residues 264-353 (HLGLDLMDRK…DESAELFSAP (90 aa)). Residues arginine 319 and arginine 324 each coordinate DNA.

Belongs to the RuvB family. Homohexamer. Forms an RuvA(8)-RuvB(12)-Holliday junction (HJ) complex. HJ DNA is sandwiched between 2 RuvA tetramers; dsDNA enters through RuvA and exits via RuvB. An RuvB hexamer assembles on each DNA strand where it exits the tetramer. Each RuvB hexamer is contacted by two RuvA subunits (via domain III) on 2 adjacent RuvB subunits; this complex drives branch migration. In the full resolvosome a probable DNA-RuvA(4)-RuvB(12)-RuvC(2) complex forms which resolves the HJ.

It is found in the cytoplasm. It catalyses the reaction ATP + H2O = ADP + phosphate + H(+). Functionally, the RuvA-RuvB-RuvC complex processes Holliday junction (HJ) DNA during genetic recombination and DNA repair, while the RuvA-RuvB complex plays an important role in the rescue of blocked DNA replication forks via replication fork reversal (RFR). RuvA specifically binds to HJ cruciform DNA, conferring on it an open structure. The RuvB hexamer acts as an ATP-dependent pump, pulling dsDNA into and through the RuvAB complex. RuvB forms 2 homohexamers on either side of HJ DNA bound by 1 or 2 RuvA tetramers; 4 subunits per hexamer contact DNA at a time. Coordinated motions by a converter formed by DNA-disengaged RuvB subunits stimulates ATP hydrolysis and nucleotide exchange. Immobilization of the converter enables RuvB to convert the ATP-contained energy into a lever motion, pulling 2 nucleotides of DNA out of the RuvA tetramer per ATP hydrolyzed, thus driving DNA branch migration. The RuvB motors rotate together with the DNA substrate, which together with the progressing nucleotide cycle form the mechanistic basis for DNA recombination by continuous HJ branch migration. Branch migration allows RuvC to scan DNA until it finds its consensus sequence, where it cleaves and resolves cruciform DNA. The protein is Holliday junction branch migration complex subunit RuvB of Aromatoleum aromaticum (strain DSM 19018 / LMG 30748 / EbN1) (Azoarcus sp. (strain EbN1)).